A 788-amino-acid polypeptide reads, in one-letter code: Cap-specific mRNA (nucleoside-2'-O-)-methyltransferase 1 (788 aa).

Positions 25 to 71 (YSNKAMEMMKKMGYENDKGLGKSNQGRLEPIIAVQQDGRRGFGLKLD) constitute a G-patch domain. Residues 143 to 147 (KTVFD) and arginine 158 contribute to the substrate site. The 214-residue stretch at 171–384 (IFLNRAAVKM…ERYLVCKYKR (214 aa)) folds into the RrmJ-type SAM-dependent 2'-O-MTase domain. An S-adenosyl-L-methionine-binding site is contributed by asparagine 174. Residue lysine 179 is part of the active site. 215–221 (CAGPGGF) lines the S-adenosyl-L-methionine pocket. Residue aspartate 298 is part of the active site. 308-310 (NIQ) lines the substrate pocket. The Proton acceptor role is filled by lysine 338. Asparagine 373 provides a ligand contact to substrate.

Interacts (via C-terminus) with r2d2 (via C-terminus).

The protein localises to the nucleus. It localises to the cytoplasm. The enzyme catalyses a 5'-end (N(7)-methyl 5'-triphosphoguanosine)-ribonucleoside in mRNA + S-adenosyl-L-methionine = a 5'-end (N(7)-methyl 5'-triphosphoguanosine)-(2'-O-methyl-ribonucleoside) in mRNA + S-adenosyl-L-homocysteine + H(+). S-adenosyl-L-methionine-dependent methyltransferase that mediates mRNA cap1 2'-O-ribose methylation to the 5'-cap structure of mRNAs. Methylates the ribose of the first nucleotide of a m(7)GpppG-capped mRNA to produce m(7)GpppNmp (cap1). Positively regulates the Ago2-dependent small RNA pathway, with roles in both siRNA biogenesis and RISC assembly. Involved in facilitating conversion of pre-RISC into holo-RISC, possibly by promoting the unwinding of Ago2-bound siRNA duplexes and thus the retention of the guide strand in holo-RISC. This chain is Cap-specific mRNA (nucleoside-2'-O-)-methyltransferase 1, found in Drosophila melanogaster (Fruit fly).